We begin with the raw amino-acid sequence, 334 residues long: Glyceraldehyde-3-phosphate dehydrogenase (334 aa).

Residues arginine 11–isoleucine 12, aspartate 33, and serine 119 each bind NAD(+). D-glyceraldehyde 3-phosphate is bound by residues serine 149 to threonine 151 and threonine 180. Cysteine 150 functions as the Nucleophile in the catalytic mechanism. Asparagine 181 is a binding site for NAD(+). D-glyceraldehyde 3-phosphate-binding positions include arginine 197, threonine 210–glycine 211, and arginine 233. Asparagine 314 provides a ligand contact to NAD(+).

It belongs to the glyceraldehyde-3-phosphate dehydrogenase family. As to quaternary structure, homotetramer.

The protein resides in the cytoplasm. The enzyme catalyses D-glyceraldehyde 3-phosphate + phosphate + NAD(+) = (2R)-3-phospho-glyceroyl phosphate + NADH + H(+). It participates in carbohydrate degradation; glycolysis; pyruvate from D-glyceraldehyde 3-phosphate: step 1/5. In terms of biological role, catalyzes the oxidative phosphorylation of glyceraldehyde 3-phosphate (G3P) to 1,3-bisphosphoglycerate (BPG) using the cofactor NAD. The first reaction step involves the formation of a hemiacetal intermediate between G3P and a cysteine residue, and this hemiacetal intermediate is then oxidized to a thioester, with concomitant reduction of NAD to NADH. The reduced NADH is then exchanged with the second NAD, and the thioester is attacked by a nucleophilic inorganic phosphate to produce BPG. This chain is Glyceraldehyde-3-phosphate dehydrogenase (gap), found in Clostridium pasteurianum.